Reading from the N-terminus, the 492-residue chain is Ethanolamine-phosphate phospho-lyase (492 aa).

Lys-280 carries the post-translational modification N6-(pyridoxal phosphate)lysine. The segment at Ala-462 to Asn-492 is disordered.

Belongs to the class-III pyridoxal-phosphate-dependent aminotransferase family. Homotetramer. The cofactor is pyridoxal 5'-phosphate.

Its subcellular location is the mitochondrion. The enzyme catalyses phosphoethanolamine + H2O = acetaldehyde + NH4(+) + phosphate. Functionally, catalyzes the pyridoxal-phosphate-dependent breakdown of phosphoethanolamine, converting it to ammonia, inorganic phosphate and acetaldehyde. The protein is Ethanolamine-phosphate phospho-lyase (etnppl) of Danio rerio (Zebrafish).